Reading from the N-terminus, the 522-residue chain is Maturase K (522 aa).

The protein belongs to the intron maturase 2 family. MatK subfamily.

The protein resides in the plastid. Its subcellular location is the chloroplast. Usually encoded in the trnK tRNA gene intron. Probably assists in splicing its own and other chloroplast group II introns. The chain is Maturase K from Iris domestica (Leopard lily).